A 599-amino-acid chain; its full sequence is Elongation factor 4 (599 aa).

Residues lysine 2 to glutamate 184 enclose the tr-type G domain. Residues aspartate 14–threonine 19 and asparagine 131–aspartate 134 contribute to the GTP site.

Belongs to the TRAFAC class translation factor GTPase superfamily. Classic translation factor GTPase family. LepA subfamily.

The protein resides in the cell inner membrane. It carries out the reaction GTP + H2O = GDP + phosphate + H(+). Required for accurate and efficient protein synthesis under certain stress conditions. May act as a fidelity factor of the translation reaction, by catalyzing a one-codon backward translocation of tRNAs on improperly translocated ribosomes. Back-translocation proceeds from a post-translocation (POST) complex to a pre-translocation (PRE) complex, thus giving elongation factor G a second chance to translocate the tRNAs correctly. Binds to ribosomes in a GTP-dependent manner. The sequence is that of Elongation factor 4 from Klebsiella pneumoniae (strain 342).